The chain runs to 510 residues: ATP synthase subunit alpha, chloroplastic (510 aa).

170–177 (GDRQTGKT) serves as a coordination point for ATP.

It belongs to the ATPase alpha/beta chains family. As to quaternary structure, F-type ATPases have 2 components, CF(1) - the catalytic core - and CF(0) - the membrane proton channel. CF(1) has five subunits: alpha(3), beta(3), gamma(1), delta(1), epsilon(1). CF(0) has four main subunits: a, b, b' and c.

It is found in the plastid. Its subcellular location is the chloroplast thylakoid membrane. The catalysed reaction is ATP + H2O + 4 H(+)(in) = ADP + phosphate + 5 H(+)(out). Produces ATP from ADP in the presence of a proton gradient across the membrane. The alpha chain is a regulatory subunit. The chain is ATP synthase subunit alpha, chloroplastic from Lotus japonicus (Lotus corniculatus var. japonicus).